The primary structure comprises 350 residues: Uroporphyrinogen decarboxylase (350 aa).

Substrate is bound by residues 28–32, Phe-47, Asp-78, Tyr-155, Ser-210, and His-325; that span reads RQAGR.

Belongs to the uroporphyrinogen decarboxylase family. Homodimer.

The protein resides in the cytoplasm. The catalysed reaction is uroporphyrinogen III + 4 H(+) = coproporphyrinogen III + 4 CO2. It participates in porphyrin-containing compound metabolism; protoporphyrin-IX biosynthesis; coproporphyrinogen-III from 5-aminolevulinate: step 4/4. Catalyzes the decarboxylation of four acetate groups of uroporphyrinogen-III to yield coproporphyrinogen-III. The polypeptide is Uroporphyrinogen decarboxylase (Synechocystis sp. (strain ATCC 27184 / PCC 6803 / Kazusa)).